The chain runs to 378 residues: Ribosomal RNA large subunit methyltransferase G (378 aa).

The protein belongs to the methyltransferase superfamily. RlmG family.

Its subcellular location is the cytoplasm. It catalyses the reaction guanosine(1835) in 23S rRNA + S-adenosyl-L-methionine = N(2)-methylguanosine(1835) in 23S rRNA + S-adenosyl-L-homocysteine + H(+). Specifically methylates the guanine in position 1835 (m2G1835) of 23S rRNA. This Salmonella gallinarum (strain 287/91 / NCTC 13346) protein is Ribosomal RNA large subunit methyltransferase G.